The following is a 474-amino-acid chain: Nucleobindin-1 (474 aa).

The signal sequence occupies residues 1 to 24; the sequence is MPPSGPRAALFLLPSLLLLRAVLA. Ser-83 is modified (phosphoserine). Position 145 is a phosphothreonine (Thr-145). Positions 147-215 form a coiled coil; that stretch reads EARDLELLIQ…QQRRHREHPK (69 aa). Over residues 190–207 the composition is skewed to basic and acidic residues; it reads SLGEEQRKEAERKLEEQQ. Positions 190–218 are disordered; sequence SLGEEQRKEAERKLEEQQRRHREHPKVNV. The segment at 225–318 is binds to GNAI2 and GNAI3; sequence LKEVWEELDG…VTLEEFLAST (94 aa). 2 EF-hand domains span residues 237–272 and 289–324; these read PNRF…ELEK and ERLR…KEFG. 8 residues coordinate Ca(2+): Asp-250, Asn-252, Asp-254, Glu-261, Asp-302, Asn-304, Asp-306, and Glu-313. A GBA motif is present at residues 300–330; it reads NVDTNQDRLVTLEEFLASTQRKEFGDTGEGW. Residues 355 to 422 are a coiled coil; it reads AYTEEELRRF…RKQQQQSHNN (68 aa). Residues 382 to 474 form a disordered region; sequence LSQETEALGR…EPPQLDSQHL (93 aa). A Phosphoserine modification is found at Ser-383. The span at 448-460 shows a compositional bias: basic and acidic residues; it reads DQKDVDASEKKVP. Ser-471 carries the post-translational modification Phosphoserine.

The protein belongs to the nucleobindin family. As to quaternary structure, interacts (via GBA motif) with guanine nucleotide-binding protein G(i) alpha subunits GNAI1, GNAI2 and GNAI3 with higher affinity for GNAI1 and GNAI3 than for GNAI2. Preferentially interacts with inactive rather than active GNAI3. Interaction with GNAI3 is inhibited when NUCB1 binds calcium, probably due to a conformational change which renders the GBA motif inaccessible. In terms of tissue distribution, expressed in bone where it is detected in the soft tissue in the center of the osteon and in the osteocyte lacuna (at protein level).

The protein localises to the golgi apparatus. It is found in the cis-Golgi network membrane. Its subcellular location is the cytoplasm. It localises to the secreted. Functionally, major calcium-binding protein of the Golgi which may have a role in calcium homeostasis. Acts as a non-receptor guanine nucleotide exchange factor which binds to and activates alpha subunits of guanine nucleotide-binding proteins (G proteins). This chain is Nucleobindin-1 (NUCB1), found in Bos taurus (Bovine).